Here is a 1622-residue protein sequence, read N- to C-terminus: FK506-binding protein 5 (1622 aa).

The PPIase FKBP-type domain occupies 178–269 (GDRVSIKYAG…IFDLEVTGSK (92 aa)). Positions 268–306 (SKKKEGSEPSLPSLNGQPSNAPQQSLPTQLFDNSPVPQD) are disordered. The span at 277–303 (SLPSLNGQPSNAPQQSLPTQLFDNSPV) shows a compositional bias: polar residues. Position 314 is an omega-N-methylarginine (Arg-314). Disordered regions lie at residues 320 to 432 (RATG…GFNN) and 518 to 538 (SPPP…PPPP). Low complexity predominate over residues 335 to 432 (ESNSRNSHSN…NMNNNNGFNN (98 aa)). Coiled coils occupy residues 607-827 (LVQT…ETER) and 854-961 (KKEE…LESQ). Disordered regions lie at residues 1043–1097 (KQQQ…EVVV) and 1122–1622 (EEVK…VLPL). 2 stretches are compositionally biased toward acidic residues: residues 1050 to 1093 (KEEE…EEEK) and 1152 to 1168 (DDED…DINE). Residues 1169-1182 (EDLKNIDAEIEKMQ) show a composition bias toward basic and acidic residues. Acidic residues-rich tracts occupy residues 1185–1199 (MGDE…EEEK) and 1222–1260 (ESEE…EQED). Residues 1261–1271 (KVESDVEEKIV) show a composition bias toward basic and acidic residues. The segment covering 1320-1335 (DDDEDNEKDVASDSEE) has biased composition (acidic residues). Positions 1353–1369 (EEKVVEQVKEEINETKF) are enriched in basic and acidic residues. The span at 1380–1412 (TTTEEKEEEKEEEKVEEEEEKVVEPPTIDDDET) shows a compositional bias: acidic residues. 2 stretches are compositionally biased toward low complexity: residues 1435 to 1449 (STTA…TSST) and 1465 to 1504 (KTSF…TPTS). 2 stretches are compositionally biased toward polar residues: residues 1519-1532 (FGNS…PSTT) and 1581-1609 (AKSN…SPLT).

The protein belongs to the FKBP-type PPIase family.

It carries out the reaction [protein]-peptidylproline (omega=180) = [protein]-peptidylproline (omega=0). With respect to regulation, inhibited by both FK506 and rapamycin. Its function is as follows. PPIases accelerate the folding of proteins by catalyzing the cis-trans isomerization of proline imidic peptide bonds in oligopeptides. In Dictyostelium discoideum (Social amoeba), this protein is FK506-binding protein 5 (fkbp5).